The chain runs to 96 residues: UPF0235 protein Spro_4033 (96 aa).

It belongs to the UPF0235 family.

In Serratia proteamaculans (strain 568), this protein is UPF0235 protein Spro_4033.